The sequence spans 947 residues: MEFSWGSGQESQRLLLSFLFLAIWEPGNSQLHYSIPEEAKHGTFVGRIAQDLGLELAELVPRLFRVASKDRGDLLEVNLQNGILFVNSRIDREELCGRSAECSIHLEVIVDRPLQVFHVEVEVRDINDNPPTFPTTQKNLFIAESRPLDTWFPLEGASDSDIGINAVLTYRLSPNDYFSLEKPTNSERVKGLGLILRKSLDREETPELFLVLTVTDGGKPELTGSVQLLITVLDANDNSPVFDRSLYTVKLPENVPNGTLVVKVNASDLDEGANGEVMYSFSTDISPNVKNKFHIDPVTGEIAVKGYIDFEECTSYEILIEGIDKGQLPLSGHCKVIVQVEDINDNAPELEFKSLSLPIRENAPVGTVIALISVFDPDTGVNGQVTCSLTPQVPFKLVSTFKNYYSLVLDSALDRETTADYKVVVIARDGGLPSLWATASVSVEVADVNDNAPAFAQPEYTVFVKENNPPGAHIFTVSAVDADSQENALVSYSLVERRVGERLLSSYVSVHAESGKVFALQPLDHEELELLQFQVSARDAGVPALGSNVTLQVFVLDENDNAPTLLEPEAGISGGIVSRLVSRSVGAGHVVAKVRAVDADSGYNAWLSYELQSSEGNSRSLFRVGLYTGEISTTRSLDEADSPRQRLLVLVKDHGDPAMMVTATVLVSLVENGPLPKAPSRVSTRVTNAEASLVDVNVYLIIAICAVSSLLVLTLLLYSALRCSTVPSESVCGPPKPVMVCSSAVGSWSYSQQRRQRVCSGEYPPKTDLMAFSPSLSDSRDREDQLQSTEDSSGKPRQPNPDWRYSASLRAGMHSSVHLEEAGILRAGPGGPDQQWPTVSSATPEPEAGEVSPPVGAGVNSNSWTFKYGPGNPKQPGPGELPDKFIIPGSPAIISIRQESANNQIDKSDFITFGKKEETKKKKKKKKGNKTQEKKEKGNSTTDNSDQ.

An N-terminal signal peptide occupies residues 1–29 (MEFSWGSGQESQRLLLSFLFLAIWEPGNS). Cadherin domains are found at residues 30–133 (QLHY…PPTF), 134–242 (PTTQ…SPVF), 243–350 (DRSL…APEL), 351–455 (EFKS…APAF), 456–565 (AQPE…APTL), and 573–681 (SGGI…APSR). The Extracellular segment spans residues 30 to 697 (QLHYSIPEEA…NAEASLVDVN (668 aa)). C96 and C102 form a disulfide bridge. Residues N257 and N265 are each glycosylated (N-linked (GlcNAc...) asparagine). N548 is a glycosylation site (N-linked (GlcNAc...) asparagine). A helical transmembrane segment spans residues 698 to 718 (VYLIIAICAVSSLLVLTLLLY). The Cytoplasmic portion of the chain corresponds to 719 to 947 (SALRCSTVPS…GNSTTDNSDQ (229 aa)). PXXP repeat units lie at residues 734–737 (PPKP), 774–777 (PSLS), 796–799 (PRQP), 829–832 (PGGP), 870–873 (PGNP), and 888–891 (PGSP). Residues 734-891 (PPKPVMVCSS…PDKFIIPGSP (158 aa)) are 6 X 4 AA repeats of P-X-X-P. Residues 738–947 (VMVCSSAVGS…GNSTTDNSDQ (210 aa)) form a required for interaction with FYN region. 2 disordered regions span residues 761–805 (GEYP…DWRY) and 824–853 (ILRA…EVSP). The interval 897–947 (RQESANNQIDKSDFITFGKKEETKKKKKKKKGNKTQEKKEKGNSTTDNSDQ) is disordered. Over residues 906 to 920 (DKSDFITFGKKEETK) the composition is skewed to basic and acidic residues.

Forms homodimers in trans (molecules expressed by two different cells). Forms promiscuous heterodimers in cis (at the plasma membrane of the same cell) with other protocadherins. Interacts with FYN. As to expression, detected in brain.

It localises to the cell membrane. Calcium-dependent cell-adhesion protein involved in cells self-recognition and non-self discrimination. Thereby, it is involved in the establishment and maintenance of specific neuronal connections in the brain. This Rattus norvegicus (Rat) protein is Protocadherin alpha-4.